A 251-amino-acid chain; its full sequence is Dehydration-responsive element-binding protein 1I (251 aa).

Positions 1–50 (MCTSKLEEITGEWPPPALQAASTTSSSEPCRRLSPPSSKRPAGRTKFHET) are disordered. Residues 54–114 (VFRGVRRRGR…GRAAACLNFA (61 aa)) constitute a DNA-binding region (AP2/ERF). A disordered region spans residues 169–198 (ATSEPSAASDDDAVTSSSSTTDADEEASPF).

Belongs to the AP2/ERF transcription factor family. ERF subfamily.

Its subcellular location is the nucleus. Its function is as follows. Transcriptional activator that binds specifically to the DNA sequence 5'-[AG]CCGAC-3'. Binding to the C-repeat/DRE element mediates high salinity- and dehydration-inducible transcription. The chain is Dehydration-responsive element-binding protein 1I (DREB1I) from Oryza sativa subsp. japonica (Rice).